We begin with the raw amino-acid sequence, 376 residues long: uncharacterized protein (376 aa).

A signal peptide spans 1 to 31; that stretch reads MSRHKVYKAISSYVIIAIIIIAIVAVVGVLL. The segment at 37–57 is disordered; that stretch reads SSSSVTSTTTPTTSSSVSPSS.

Belongs to the bacterial solute-binding protein 1 family. WtpA subfamily.

This is an uncharacterized protein from Sulfurisphaera tokodaii (strain DSM 16993 / JCM 10545 / NBRC 100140 / 7) (Sulfolobus tokodaii).